Consider the following 93-residue polypeptide: Transcription factor RADIALIS (93 aa).

The region spanning 6 to 61 is the SANT domain; sequence GSGRPWSAKENKAFERALAVYDKDTPDRWANVARAVEGRTPEEVKKHYEILVEDIK.

As to expression, specifically expressed in the dorsal region of developing flowers.

It is found in the nucleus. In terms of biological role, involved in the dorsovental asymmetry of flowers. Promotes dorsal identity. In Antirrhinum majus (Garden snapdragon), this protein is Transcription factor RADIALIS (RAD).